The sequence spans 93 residues: DNA/RNA-binding protein Alba (93 aa).

N6-acetyllysine is present on Lys-11.

It belongs to the histone-like Alba family. In terms of processing, acetylated. Acetylation at Lys-11 decreases DNA-binding affinity.

The protein resides in the cytoplasm. The protein localises to the chromosome. Functionally, binds double-stranded DNA tightly but without sequence specificity. Involved in DNA compaction. The protein is DNA/RNA-binding protein Alba of Pyrococcus horikoshii (strain ATCC 700860 / DSM 12428 / JCM 9974 / NBRC 100139 / OT-3).